The sequence spans 151 residues: uncharacterized protein (151 aa).

Residues 2 to 133 form the Response regulatory domain; it reads KTLIVEDNPK…VFVEAVHYSQ (132 aa). Aspartate 53 bears the 4-aspartylphosphate mark.

This is an uncharacterized protein from Sinorhizobium fredii (strain NBRC 101917 / NGR234).